Consider the following 371-residue polypeptide: Leu/Ile/Val-binding protein homolog 1 (371 aa).

A signal peptide spans 1 to 23 (MRKTLFSGVALAAVIAFGGSAWA).

The protein belongs to the leucine-binding protein family.

Its function is as follows. Component of an amino-acid transport system. The sequence is that of Leu/Ile/Val-binding protein homolog 1 from Brucella abortus (strain 2308).